The following is a 414-amino-acid chain: Serine hydroxymethyltransferase (414 aa).

(6S)-5,6,7,8-tetrahydrofolate contacts are provided by residues Leu-117 and 121–123 (GHL). Residue Lys-226 is modified to N6-(pyridoxal phosphate)lysine.

The protein belongs to the SHMT family. In terms of assembly, homodimer. Pyridoxal 5'-phosphate serves as cofactor.

Its subcellular location is the cytoplasm. The enzyme catalyses (6R)-5,10-methylene-5,6,7,8-tetrahydrofolate + glycine + H2O = (6S)-5,6,7,8-tetrahydrofolate + L-serine. The protein operates within one-carbon metabolism; tetrahydrofolate interconversion. Its pathway is amino-acid biosynthesis; glycine biosynthesis; glycine from L-serine: step 1/1. In terms of biological role, catalyzes the reversible interconversion of serine and glycine with tetrahydrofolate (THF) serving as the one-carbon carrier. This reaction serves as the major source of one-carbon groups required for the biosynthesis of purines, thymidylate, methionine, and other important biomolecules. Also exhibits THF-independent aldolase activity toward beta-hydroxyamino acids, producing glycine and aldehydes, via a retro-aldol mechanism. The sequence is that of Serine hydroxymethyltransferase from Dictyoglomus turgidum (strain DSM 6724 / Z-1310).